The sequence spans 173 residues: Mesencephalic astrocyte-derived neurotrophic factor homolog (173 aa).

A signal peptide spans 1–22 (MNTSHIVLMICFIVGVGQTALA). 4 cysteine pairs are disulfide-bonded: C28–C114, C31–C103, C61–C72, and C148–C151.

This sequence belongs to the ARMET family.

The protein resides in the secreted. Its function is as follows. Required during the maturation of the embryonic nervous system for maintenance of neuronal and cuticular connectivity. Essential for maintenance of dopaminergic neurons and dopamine levels. The polypeptide is Mesencephalic astrocyte-derived neurotrophic factor homolog (Drosophila virilis (Fruit fly)).